The following is a 486-amino-acid chain: 2-succinylbenzoate--CoA ligase (486 aa).

The protein belongs to the ATP-dependent AMP-binding enzyme family. MenE subfamily.

The catalysed reaction is 2-succinylbenzoate + ATP + CoA = 2-succinylbenzoyl-CoA + AMP + diphosphate. It functions in the pathway quinol/quinone metabolism; 1,4-dihydroxy-2-naphthoate biosynthesis; 1,4-dihydroxy-2-naphthoate from chorismate: step 5/7. Its pathway is quinol/quinone metabolism; menaquinone biosynthesis. Functionally, converts 2-succinylbenzoate (OSB) to 2-succinylbenzoyl-CoA (OSB-CoA). This is 2-succinylbenzoate--CoA ligase from Bacillus pumilus (strain SAFR-032).